The chain runs to 325 residues: Deoxyhypusine hydroxylase (325 aa).

The residue at position 2 (Ser-2) is an N-acetylserine. 2 HEAT-like PBS-type repeats span residues 77–103 and 110–136; these read LKHE…VMLD and VRHE…AAKE. Fe cation is bound by residues His-79, Glu-80, His-112, and Glu-113. The residue at position 126 (Ser-126) is a Phosphoserine. Phosphothreonine is present on Thr-187. HEAT-like PBS-type repeat units follow at residues 202–231, 235–261, and 268–294; these read LFQR…FSAE, FKHE…VLGR, and VRHE…YLND. Fe cation is bound by residues His-237, Glu-238, His-270, and Glu-271. Ser-281 carries the post-translational modification Phosphoserine.

The protein belongs to the deoxyhypusine hydroxylase family. Requires Fe(2+) as cofactor.

Its subcellular location is the cytoplasm. It is found in the nucleus. It carries out the reaction [eIF5A protein]-deoxyhypusine + AH2 + O2 = [eIF5A protein]-hypusine + A + H2O. It functions in the pathway protein modification; eIF5A hypusination. In terms of biological role, catalyzes the hydroxylation of the N(6)-(4-aminobutyl)-L-lysine intermediate to form hypusine, an essential post-translational modification only found in mature eIF-5A factor. The sequence is that of Deoxyhypusine hydroxylase from Saccharomyces cerevisiae (strain ATCC 204508 / S288c) (Baker's yeast).